Consider the following 517-residue polypeptide: Endoglucanase A (517 aa).

The signal sequence occupies residues 1 to 25 (MKRSLLKTCSIIAGATIIFSSLSIS). The Proton donor role is filled by E185. E309 serves as the catalytic Nucleophile. A compositionally biased stretch (basic and acidic residues) spans 382 to 392 (HPEATEDDKPS). Residues 382–424 (HPEATEDDKPSTDVTNPDSGNTKPDSGNTNPGTETTTPTDNEK) are disordered. The span at 393-407 (TDVTNPDSGNTKPDS) shows a compositional bias: polar residues. Low complexity predominate over residues 408–420 (GNTNPGTETTTPT). The CBM2 domain occupies 416–517 (TTTPTDNEKI…VISNFEYKFD (102 aa)).

It belongs to the glycosyl hydrolase 5 (cellulase A) family.

It carries out the reaction Endohydrolysis of (1-&gt;4)-beta-D-glucosidic linkages in cellulose, lichenin and cereal beta-D-glucans.. Its function is as follows. Hydrolyzes barley beta-glucan, lichenan, carboxymethylcellulose and xylan. It shows preferential activity against the larger cellooligosaccharides (cellohexaose and cellopentaose); cellotetraose is the smallest substrate degraded completely. This chain is Endoglucanase A (celA), found in Clostridium longisporum.